The chain runs to 283 residues: 4-hydroxy-3-methylbut-2-enyl diphosphate reductase (283 aa).

Residue cysteine 12 coordinates [4Fe-4S] cluster. The (2E)-4-hydroxy-3-methylbut-2-enyl diphosphate site is built by histidine 40 and histidine 72. Residues histidine 40 and histidine 72 each contribute to the dimethylallyl diphosphate site. Residues histidine 40 and histidine 72 each coordinate isopentenyl diphosphate. Residue cysteine 94 participates in [4Fe-4S] cluster binding. Residue histidine 122 participates in (2E)-4-hydroxy-3-methylbut-2-enyl diphosphate binding. A dimethylallyl diphosphate-binding site is contributed by histidine 122. Histidine 122 lines the isopentenyl diphosphate pocket. The active-site Proton donor is the glutamate 124. Threonine 160 contributes to the (2E)-4-hydroxy-3-methylbut-2-enyl diphosphate binding site. Cysteine 188 is a binding site for [4Fe-4S] cluster. Residues serine 216, asparagine 218, and serine 259 each contribute to the (2E)-4-hydroxy-3-methylbut-2-enyl diphosphate site. The dimethylallyl diphosphate site is built by serine 216, asparagine 218, and serine 259. Residues serine 216, asparagine 218, and serine 259 each coordinate isopentenyl diphosphate.

It belongs to the IspH family. [4Fe-4S] cluster is required as a cofactor.

It carries out the reaction isopentenyl diphosphate + 2 oxidized [2Fe-2S]-[ferredoxin] + H2O = (2E)-4-hydroxy-3-methylbut-2-enyl diphosphate + 2 reduced [2Fe-2S]-[ferredoxin] + 2 H(+). The catalysed reaction is dimethylallyl diphosphate + 2 oxidized [2Fe-2S]-[ferredoxin] + H2O = (2E)-4-hydroxy-3-methylbut-2-enyl diphosphate + 2 reduced [2Fe-2S]-[ferredoxin] + 2 H(+). Its pathway is isoprenoid biosynthesis; dimethylallyl diphosphate biosynthesis; dimethylallyl diphosphate from (2E)-4-hydroxy-3-methylbutenyl diphosphate: step 1/1. It functions in the pathway isoprenoid biosynthesis; isopentenyl diphosphate biosynthesis via DXP pathway; isopentenyl diphosphate from 1-deoxy-D-xylulose 5-phosphate: step 6/6. Catalyzes the conversion of 1-hydroxy-2-methyl-2-(E)-butenyl 4-diphosphate (HMBPP) into a mixture of isopentenyl diphosphate (IPP) and dimethylallyl diphosphate (DMAPP). Acts in the terminal step of the DOXP/MEP pathway for isoprenoid precursor biosynthesis. This chain is 4-hydroxy-3-methylbut-2-enyl diphosphate reductase, found in Dictyoglomus turgidum (strain DSM 6724 / Z-1310).